We begin with the raw amino-acid sequence, 288 residues long: Putative N-terminal acetyltransferase 2 (288 aa).

Residues 68 to 90 (TEEKSSQFDENKSKSNNGKKNEP) form a disordered region.

Heterooligomeric.

Its subcellular location is the cytoplasm. Functionally, maybe involved in N-terminal acetylation of proteins. N-acetylation plays a role in normal eukaryotic translation and processing, protect against proteolytic degradation and protein turnover. The sequence is that of Putative N-terminal acetyltransferase 2 (NAT2) from Saccharomyces cerevisiae (strain ATCC 204508 / S288c) (Baker's yeast).